The sequence spans 631 residues: 1-deoxy-D-xylulose-5-phosphate synthase (631 aa).

The disordered stretch occupies residues 1–21 (MPTTFHEIPRERPLTPLLDSA). Thiamine diphosphate is bound by residues histidine 87 and 128–130 (GHS). A Mg(2+)-binding site is contributed by aspartate 159. Thiamine diphosphate contacts are provided by residues 160-161 (GA), asparagine 188, phenylalanine 295, and glutamate 377. Asparagine 188 contributes to the Mg(2+) binding site.

This sequence belongs to the transketolase family. DXPS subfamily. Homodimer. It depends on Mg(2+) as a cofactor. Requires thiamine diphosphate as cofactor.

It catalyses the reaction D-glyceraldehyde 3-phosphate + pyruvate + H(+) = 1-deoxy-D-xylulose 5-phosphate + CO2. It functions in the pathway metabolic intermediate biosynthesis; 1-deoxy-D-xylulose 5-phosphate biosynthesis; 1-deoxy-D-xylulose 5-phosphate from D-glyceraldehyde 3-phosphate and pyruvate: step 1/1. Its function is as follows. Catalyzes the acyloin condensation reaction between C atoms 2 and 3 of pyruvate and glyceraldehyde 3-phosphate to yield 1-deoxy-D-xylulose-5-phosphate (DXP). The chain is 1-deoxy-D-xylulose-5-phosphate synthase from Ectopseudomonas mendocina (strain ymp) (Pseudomonas mendocina).